A 260-amino-acid polypeptide reads, in one-letter code: Ubiquinone/menaquinone biosynthesis C-methyltransferase UbiE (260 aa).

S-adenosyl-L-methionine contacts are provided by residues T83, D104, and 132-133 (NA).

It belongs to the class I-like SAM-binding methyltransferase superfamily. MenG/UbiE family.

The enzyme catalyses a 2-demethylmenaquinol + S-adenosyl-L-methionine = a menaquinol + S-adenosyl-L-homocysteine + H(+). It catalyses the reaction a 2-methoxy-6-(all-trans-polyprenyl)benzene-1,4-diol + S-adenosyl-L-methionine = a 5-methoxy-2-methyl-3-(all-trans-polyprenyl)benzene-1,4-diol + S-adenosyl-L-homocysteine + H(+). It participates in quinol/quinone metabolism; menaquinone biosynthesis; menaquinol from 1,4-dihydroxy-2-naphthoate: step 2/2. The protein operates within cofactor biosynthesis; ubiquinone biosynthesis. Its function is as follows. Methyltransferase required for the conversion of demethylmenaquinol (DMKH2) to menaquinol (MKH2) and the conversion of 2-polyprenyl-6-methoxy-1,4-benzoquinol (DDMQH2) to 2-polyprenyl-3-methyl-6-methoxy-1,4-benzoquinol (DMQH2). In Bartonella henselae (strain ATCC 49882 / DSM 28221 / CCUG 30454 / Houston 1) (Rochalimaea henselae), this protein is Ubiquinone/menaquinone biosynthesis C-methyltransferase UbiE.